Here is a 193-residue protein sequence, read N- to C-terminus: MPIDKAKIEKAVRMILEAIGEDPEREGLRETPRRVADMFEELLEGYDFTEEYTWFTEATDLVVVSGIRFYSLCEHHLLPFFGVAHVAYLPRGKVIGLSKIVRIVNKYSRRLQIQERMTKQIADEISKATGSPDVMVITEAVHLCMAMRGVRNGAPTVVAAVRGEFERDQSLKEEVYRIIEPHRLSRVIALSFF.

Zn(2+) contacts are provided by Cys73, His76, and Cys144.

This sequence belongs to the GTP cyclohydrolase I family. Homomer.

The enzyme catalyses GTP + H2O = 7,8-dihydroneopterin 3'-triphosphate + formate + H(+). It participates in cofactor biosynthesis; 7,8-dihydroneopterin triphosphate biosynthesis; 7,8-dihydroneopterin triphosphate from GTP: step 1/1. The protein is GTP cyclohydrolase 1 of Hyperthermus butylicus (strain DSM 5456 / JCM 9403 / PLM1-5).